A 147-amino-acid polypeptide reads, in one-letter code: Hemoglobin subunit beta (147 aa).

V2 is modified (N-acetylvaline). Positions N3–H147 constitute a Globin domain. S45 is modified (phosphoserine). The residue at position 60 (K60) is an N6-acetyllysine. H64 provides a ligand contact to heme b. K83 carries the post-translational modification N6-acetyllysine. Position 93 (H93) interacts with heme b. The residue at position 94 (C94) is an S-nitrosocysteine.

It belongs to the globin family. In terms of assembly, heterotetramer of two alpha chains and two beta chains. As to expression, red blood cells.

In terms of biological role, involved in oxygen transport from the lung to the various peripheral tissues. The chain is Hemoglobin subunit beta (HBB) from Vicugna pacos (Alpaca).